We begin with the raw amino-acid sequence, 490 residues long: Glycine--tRNA ligase (490 aa).

2 residues coordinate substrate: arginine 99 and glutamate 163. Residues 195 to 197, 205 to 210, 282 to 283, and 326 to 329 contribute to the ATP site; these read RNE, FRTREF, EL, and GLTR. 210–214 is a substrate binding site; sequence FEQME. Substrate is bound at residue 322 to 326; sequence EPAAG. Positions 470–490 are disordered; sequence PVEMGGEPWPESGVQEAGGLY.

It belongs to the class-II aminoacyl-tRNA synthetase family. As to quaternary structure, homodimer.

The protein resides in the cytoplasm. It catalyses the reaction tRNA(Gly) + glycine + ATP = glycyl-tRNA(Gly) + AMP + diphosphate. In terms of biological role, catalyzes the attachment of glycine to tRNA(Gly). This Bifidobacterium longum (strain NCC 2705) protein is Glycine--tRNA ligase.